The chain runs to 346 residues: Methylthioribose-1-phosphate isomerase (346 aa).

Substrate-binding positions include 54–56 (RGA), R91, and Q192. Catalysis depends on D233, which acts as the Proton donor. 243–244 (NK) contributes to the substrate binding site.

Belongs to the eIF-2B alpha/beta/delta subunits family. MtnA subfamily.

The catalysed reaction is 5-(methylsulfanyl)-alpha-D-ribose 1-phosphate = 5-(methylsulfanyl)-D-ribulose 1-phosphate. Its pathway is amino-acid biosynthesis; L-methionine biosynthesis via salvage pathway; L-methionine from S-methyl-5-thio-alpha-D-ribose 1-phosphate: step 1/6. Its function is as follows. Catalyzes the interconversion of methylthioribose-1-phosphate (MTR-1-P) into methylthioribulose-1-phosphate (MTRu-1-P). The protein is Methylthioribose-1-phosphate isomerase of Yersinia pseudotuberculosis serotype IB (strain PB1/+).